A 611-amino-acid chain; its full sequence is Dihydroxy-acid dehydratase (611 aa).

D81 is a Mg(2+) binding site. Residue C122 coordinates [2Fe-2S] cluster. Mg(2+) is bound by residues D123 and K124. N6-carboxylysine is present on K124. Position 195 (C195) interacts with [2Fe-2S] cluster. Residue E491 participates in Mg(2+) binding. S517 functions as the Proton acceptor in the catalytic mechanism.

This sequence belongs to the IlvD/Edd family. Homodimer. [2Fe-2S] cluster serves as cofactor. The cofactor is Mg(2+).

It carries out the reaction (2R)-2,3-dihydroxy-3-methylbutanoate = 3-methyl-2-oxobutanoate + H2O. The enzyme catalyses (2R,3R)-2,3-dihydroxy-3-methylpentanoate = (S)-3-methyl-2-oxopentanoate + H2O. Its pathway is amino-acid biosynthesis; L-isoleucine biosynthesis; L-isoleucine from 2-oxobutanoate: step 3/4. It functions in the pathway amino-acid biosynthesis; L-valine biosynthesis; L-valine from pyruvate: step 3/4. Functionally, functions in the biosynthesis of branched-chain amino acids. Catalyzes the dehydration of (2R,3R)-2,3-dihydroxy-3-methylpentanoate (2,3-dihydroxy-3-methylvalerate) into 2-oxo-3-methylpentanoate (2-oxo-3-methylvalerate) and of (2R)-2,3-dihydroxy-3-methylbutanoate (2,3-dihydroxyisovalerate) into 2-oxo-3-methylbutanoate (2-oxoisovalerate), the penultimate precursor to L-isoleucine and L-valine, respectively. The protein is Dihydroxy-acid dehydratase of Brucella melitensis biotype 1 (strain ATCC 23456 / CCUG 17765 / NCTC 10094 / 16M).